The sequence spans 773 residues: Phenylalanine--tRNA ligase beta subunit (773 aa).

The tRNA-binding domain occupies 39 to 150 (LKAPDKVVVG…GKLELGRPLN (112 aa)). In terms of domain architecture, B5 spans 391-467 (KELPIIPISI…RIIGIDNIAS (77 aa)). 4 residues coordinate Mg(2+): aspartate 445, aspartate 451, glutamate 454, and glutamate 455. The 92-residue stretch at 682-773 (SKFPAITRDL…TLKNLGLDLR (92 aa)) folds into the FDX-ACB domain.

It belongs to the phenylalanyl-tRNA synthetase beta subunit family. Type 1 subfamily. As to quaternary structure, tetramer of two alpha and two beta subunits. It depends on Mg(2+) as a cofactor.

Its subcellular location is the cytoplasm. The catalysed reaction is tRNA(Phe) + L-phenylalanine + ATP = L-phenylalanyl-tRNA(Phe) + AMP + diphosphate + H(+). The sequence is that of Phenylalanine--tRNA ligase beta subunit (pheT) from Campylobacter jejuni subsp. jejuni serotype O:2 (strain ATCC 700819 / NCTC 11168).